Consider the following 1023-residue polypeptide: Sodium/potassium-transporting ATPase subunit alpha-1 (1023 aa).

Residues 1–5 (MGKGV) constitute a propeptide that is removed on maturation. The segment covering 1-11 (MGKGVGRDKYE) has biased composition (basic and acidic residues). The interval 1-38 (MGKGVGRDKYEPAAVSEHGDKKGKKAKKERDMDELKKE) is disordered. The Cytoplasmic portion of the chain corresponds to 6-87 (GRDKYEPAAV…NALTPPPTTP (82 aa)). Lys-9 is modified (N6-acetyllysine). Residue Tyr-10 is modified to Phosphotyrosine. At Ser-16 the chain carries Phosphoserine; by PKC. An N6-acetyllysine modification is found at Lys-21. Residues 28 to 38 (KERDMDELKKE) show a composition bias toward basic and acidic residues. Residues Ser-40 and Ser-47 each carry the phosphoserine modification. A phosphoinositide-3 kinase binding region spans residues 82–84 (PPP). A helical transmembrane segment spans residues 88 to 108 (EWVKFCRQLFGGFSMLLWIGA). Topologically, residues 109–131 (ILCFLAYGILAATEEDFDNDNLY) are extracellular. A helical membrane pass occupies residues 132–152 (LGVVLAAVVIITGCFSYYQEA). At 153–288 (KSSKIMESFK…GGQTPIAAEI (136 aa)) the chain is on the cytoplasmic side. Positions 216 to 235 (SSLTGESEPQTRSPDFTNEN) are disordered. Ser-228 bears the Phosphoserine mark. At Tyr-260 the chain carries Phosphotyrosine. Residues 289-308 (EHFIHIITGVAVFLGVSFFI) traverse the membrane as a helical segment. Over 309–320 (LSLILEYTWLEA) the chain is Extracellular. A helical membrane pass occupies residues 321–338 (VIFLIGIIVANVPEGLLA). Residues 339 to 772 (TVTVCLTLTA…EEGRLIFDNL (434 aa)) are Cytoplasmic-facing. The active-site 4-aspartylphosphate intermediate is the Asp-376. Residues Ser-452 and Ser-484 each carry the phosphoserine modification. Lys-487 contributes to the ATP binding site. Position 542 is a phosphotyrosine (Tyr-542). Positions 596–717 (RAAVPDAVGK…QGAIVAVTGD (122 aa)) are mediates interaction with SCN7A. At Lys-661 the chain carries N6-succinyllysine. Ser-668 and Ser-675 each carry phosphoserine. Positions 717 and 721 each coordinate Mg(2+). The helical transmembrane segment at 773–792 (KKSIAYTLTSNIPEITPFLI) threads the bilayer. The Extracellular segment spans residues 793–802 (FIIANIPLPL). Residues 803–823 (GTVTILCIDLGTDMVPAISLA) traverse the membrane as a helical segment. Over 824–843 (YEQAESDIMKRQPRNPKTDK) the chain is Cytoplasmic. The helical transmembrane segment at 844–866 (LVNERLISMAYGQIGMIQALGGF) threads the bilayer. Residues 867–918 (FTYFVILAENGFLPFHLLGIRVDWDDRWINDVEDSYGQQWTYEQRKIVEFTC) lie on the Extracellular side of the membrane. Residues 919–938 (HTAFFVSIVVVQWADLVICK) traverse the membrane as a helical segment. The Cytoplasmic portion of the chain corresponds to 939 to 951 (TRRNSVFQQGMKN). Ser-943 bears the Phosphoserine; by PKA mark. Residues 952-970 (KILIFGLFEETALAAFLSY) traverse the membrane as a helical segment. The Extracellular segment spans residues 971–985 (CPGMGVALRMYPLKP). The chain crosses the membrane as a helical span at residues 986-1006 (TWWFCAFPYSLLIFVYDEIRK). At 1007-1023 (LIIRRRPGGWVEKETYY) the chain is on the cytoplasmic side.

The protein belongs to the cation transport ATPase (P-type) (TC 3.A.3) family. Type IIC subfamily. As to quaternary structure, the sodium/potassium-transporting ATPase is composed of a catalytic alpha subunit, an auxiliary non-catalytic beta subunit and an additional regulatory subunit. Interacts with regulatory subunit FXYD1. Interacts with regulatory subunit FXYD3. Interacts with SIK1. Interacts with SLC35G1 and STIM1. Interacts with CLN3; this interaction regulates the sodium/potassium-transporting ATPase complex localization at the plasma membrane. Interacts with SCN7A; activates ATP1A1 P-type sodium:potassium-exchanging transporter activity which indirectly signals to nearby neurons to regulate sodium homeostasis. Phosphorylation on Tyr-10 modulates pumping activity. Phosphorylation of Ser-943 by PKA modulates the response of ATP1A1 to PKC. Dephosphorylation by protein phosphatase 2A (PP2A) following increases in intracellular sodium, leading to increase catalytic activity. In terms of tissue distribution, expressed in endocardial endothelial cells.

Its subcellular location is the cell membrane. It is found in the basolateral cell membrane. It localises to the sarcolemma. The protein resides in the cell projection. The protein localises to the axon. Its subcellular location is the melanosome. It carries out the reaction K(+)(out) + Na(+)(in) + ATP + H2O = K(+)(in) + Na(+)(out) + ADP + phosphate + H(+). In terms of biological role, this is the catalytic component of the active enzyme, which catalyzes the hydrolysis of ATP coupled with the exchange of sodium and potassium ions across the plasma membrane. This action creates the electrochemical gradient of sodium and potassium ions, providing the energy for active transport of various nutrients. Could also be part of an osmosensory signaling pathway that senses body-fluid sodium levels and controls salt intake behavior as well as voluntary water intake to regulate sodium homeostasis. The chain is Sodium/potassium-transporting ATPase subunit alpha-1 (ATP1A1) from Oryctolagus cuniculus (Rabbit).